Reading from the N-terminus, the 1555-residue chain is Pre-mRNA cleavage complex 2 protein Pcf11 (1555 aa).

Serine 2 carries the post-translational modification N-acetylserine. The 129-residue stretch at 14 to 142 (AREDACRDYQ…ALDVRVNSLD (129 aa)) folds into the CID domain. Position 120 is a phosphoserine; by WNK1 (serine 120). Position 121 is a phosphothreonine; by WNK1 (threonine 121). Residues 167-186 (NKSPEEPSTPGTVVSSPSIS) are disordered. A phosphoserine mark is found at serine 169 and serine 182. Over residues 174–186 (STPGTVVSSPSIS) the composition is skewed to low complexity. Positions 202 to 239 (QLIRQQLLAKQKQLLELQQKKLELELEQAKAQLAVSLS) form a coiled coil. Positions 266-648 (VKAPHQVPVQ…QQQHRLSVDA (383 aa)) are disordered. Lysine 291 is covalently cross-linked (Glycyl lysine isopeptide (Lys-Gly) (interchain with G-Cter in SUMO2)). Positions 307–317 (HGKDQSHRKEF) are enriched in basic and acidic residues. Over residues 320-333 (NTLNQSDTKTSKTI) the composition is skewed to polar residues. Lysine 328 participates in a covalent cross-link: Glycyl lysine isopeptide (Lys-Gly) (interchain with G-Cter in SUMO2). Basic and acidic residues-rich tracts occupy residues 342-364 (KQEK…DSKS), 380-421 (HTKD…DVKE), and 427-442 (EKKD…EHRL). A Glycyl lysine isopeptide (Lys-Gly) (interchain with G-Cter in SUMO2) cross-link involves residue lysine 456. Residue threonine 459 is modified to Phosphothreonine. The span at 475 to 486 (STRKRSRSRSPK) shows a compositional bias: basic residues. Serine 489, serine 494, serine 509, and serine 511 each carry phosphoserine. Basic residues predominate over residues 494–508 (SPKRRDRRSPKRRQR). The segment covering 529 to 567 (SHMEEFTPPSREDRNAKRSTKQDIRDPRRMKKTEEERPQ) has biased composition (basic and acidic residues). Residues 568-578 (ETTNQHSTKSG) are compositionally biased toward polar residues. A compositionally biased stretch (basic and acidic residues) spans 599–615 (SGWEENKSLQQVDEHSK). Position 645 is a phosphoserine (serine 645). Lysine 654 participates in a covalent cross-link: Glycyl lysine isopeptide (Lys-Gly) (interchain with G-Cter in SUMO2). Serine 705 is subject to Phosphoserine. Disordered stretches follow at residues 707–732 (FNDR…PASR) and 749–781 (RPLF…PRID). Basic and acidic residues predominate over residues 716 to 725 (PRYEDSDKPF). Lysine 723 participates in a covalent cross-link: Glycyl lysine isopeptide (Lys-Gly) (interchain with G-Cter in SUMO2). A phosphoserine mark is found at serine 728 and serine 777. Residue threonine 785 is modified to Phosphothreonine. Position 794 is a phosphoserine (serine 794). Residues arginine 805, arginine 820, and arginine 833 each carry the asymmetric dimethylarginine modification. Serine 851 carries the post-translational modification Phosphoserine. Residues arginine 929, arginine 942, arginine 955, arginine 981, arginine 994, and arginine 1007 each carry the asymmetric dimethylarginine modification. Residues 1056-1081 (HGQPGPRFERTPGQPGPQRFDGPPGQ) are disordered. 2 positions are modified to asymmetric dimethylarginine: arginine 1093 and arginine 1104. Disordered stretches follow at residues 1127 to 1147 (VSFN…NAPS) and 1159 to 1187 (FDSP…RASG). Serine 1161 is modified (phosphoserine). Over residues 1162-1175 (PQGPNFNGPHGPGN) the composition is skewed to low complexity. Residue lysine 1278 forms a Glycyl lysine isopeptide (Lys-Gly) (interchain with G-Cter in SUMO2) linkage. Polar residues predominate over residues 1289–1298 (SATTQVSEVT). Residues 1289-1315 (SATTQVSEVTAQPPPEEEEDQNEDQDV) are disordered. The span at 1303–1315 (PEEEEDQNEDQDV) shows a compositional bias: acidic residues. Glycyl lysine isopeptide (Lys-Gly) (interchain with G-Cter in SUMO2) cross-links involve residues lysine 1419, lysine 1511, and lysine 1524. The tract at residues 1516–1555 (EPCDSPKVKEERIDTPPACTEESIATPSEIKTENDTVESV) is disordered. Residues 1519-1529 (DSPKVKEERID) are compositionally biased toward basic and acidic residues. A Phosphothreonine modification is found at threonine 1530. Lysine 1546 participates in a covalent cross-link: Glycyl lysine isopeptide (Lys-Gly) (interchain with G-Cter in SUMO2).

As to quaternary structure, associates with the phosphorylated CTD domain of POLR2A /RNA polymerase II. Post-translationally, phosphorylation at Ser-120 and/or Thr-121 by WNK1 weakens its association with POLR2A/RNA polymerase II, promoting transcript release from the chromatin template and mRNA export to the cytoplasm.

Its subcellular location is the nucleus. Component of pre-mRNA cleavage complex II, which promotes transcription termination by RNA polymerase II. This is Pre-mRNA cleavage complex 2 protein Pcf11 from Homo sapiens (Human).